Here is a 66-residue protein sequence, read N- to C-terminus: Potassium channel toxin alpha-KTx 30.3 (66 aa).

A signal peptide spans 1-24 (MNKTFFLVVIMATVLVLAFDATDA). Disulfide bonds link Cys30–Cys50, Cys36–Cys55, and Cys40–Cys57.

This sequence belongs to the short scorpion toxin superfamily. Potassium channel inhibitor family. Alpha-KTx 30 subfamily. As to expression, expressed by the venom gland.

It is found in the secreted. Its function is as follows. inhibits Kv1.3/KCNA3 channel. This Scorpiops jendeki (Scorpion) protein is Potassium channel toxin alpha-KTx 30.3.